Consider the following 213-residue polypeptide: Large ribosomal subunit protein uL3 (213 aa).

The disordered stretch occupies residues 124–151 (KRHGQSRGPMAHGSRYHRRPGSMGSIAP).

Belongs to the universal ribosomal protein uL3 family. As to quaternary structure, part of the 50S ribosomal subunit. Forms a cluster with proteins L14 and L19.

In terms of biological role, one of the primary rRNA binding proteins, it binds directly near the 3'-end of the 23S rRNA, where it nucleates assembly of the 50S subunit. This Geobacillus kaustophilus (strain HTA426) protein is Large ribosomal subunit protein uL3.